A 125-amino-acid chain; its full sequence is Histone H1-like protein Hc1 (125 aa).

The segment at 98–125 (TKAKVKPTKKAAPKTKVKTAKKTRSTKK) is disordered. The span at 100–125 (AKVKPTKKAAPKTKVKTAKKTRSTKK) shows a compositional bias: basic residues.

It belongs to the histone H1/H5 family. HCT subfamily.

In terms of biological role, might have a role analogous to that of eukaryotic histone proteins. This chain is Histone H1-like protein Hc1 (hctA), found in Chlamydia trachomatis serovar L2 (strain ATCC VR-902B / DSM 19102 / 434/Bu).